The chain runs to 185 residues: MINEILKDAEDRMSKAVASVESAFKKIRTGRAHPSILDSVKVNYYGSETPLSQVANITVEDARTLGVSPWENNLVPEIEKAIMKSDLGLNPATNGNLIRIPMPALTEETRKNYFKQAKNEAENGRIAIRNIRRDANGSLKDLVKEKEISEDDDRRGQDQVQKVTDKYVAQIEERLAAKEKDLMEI.

Belongs to the RRF family.

The protein resides in the cytoplasm. Responsible for the release of ribosomes from messenger RNA at the termination of protein biosynthesis. May increase the efficiency of translation by recycling ribosomes from one round of translation to another. This chain is Ribosome-recycling factor, found in Marinomonas sp. (strain MWYL1).